The sequence spans 682 residues: Methionine--tRNA ligase (682 aa).

Residues 14-24 (PYANGSIHLGH) carry the 'HIGH' region motif. The Zn(2+) site is built by C145, C148, C158, and C161. The 'KMSKS' region motif lies at 331–335 (KMSKS). K334 is a binding site for ATP. One can recognise a tRNA-binding domain in the interval 580-682 (AFAAVDLRVA…SGAKPGQRIK (103 aa)).

The protein belongs to the class-I aminoacyl-tRNA synthetase family. MetG type 1 subfamily. In terms of assembly, homodimer. Zn(2+) serves as cofactor.

The protein localises to the cytoplasm. It carries out the reaction tRNA(Met) + L-methionine + ATP = L-methionyl-tRNA(Met) + AMP + diphosphate. Functionally, is required not only for elongation of protein synthesis but also for the initiation of all mRNA translation through initiator tRNA(fMet) aminoacylation. In Pseudomonas savastanoi pv. phaseolicola (strain 1448A / Race 6) (Pseudomonas syringae pv. phaseolicola (strain 1448A / Race 6)), this protein is Methionine--tRNA ligase.